The primary structure comprises 55 residues: Lantibiotic epilancin 15X (55 aa).

Residues Met-1–Gln-24 constitute a propeptide, cleaved by ElxP. Ser-25 is subject to D-lactate; by the dehydratase ElxB and the dehydrogenase ElxO. Ser-27 is modified (2,3-didehydroalanine (Ser); by the dehydratase ElxB). A 2,3-didehydrobutyrine; by the dehydratase ElxB mark is found at Thr-31 and Thr-32. The lanthionine (Ser-Cys); by the dehydratase ElxB and the cyclase ElxC cross-link spans Ser-36 to Cys-40. 2 consecutive cross-links (beta-methyllanthionine (Thr-Cys); by the dehydratase ElxB and the cyclase ElxC) follow at residues Thr-44 to Cys-47 and Thr-46 to Cys-49. Position 52 is a 2,3-didehydrobutyrine; by the dehydratase ElxB (Thr-52).

Post-translationally, maturation of this lantibiotic involves the enzymatic conversion of Thr, and Ser into dehydrated AA by ElxB and the formation of thioether bonds with cysteine by the cyclase ElxC. The next steps are cleavage of the leader peptide by ElxP and membrane translocation by ElxT. The leader peptide may be removed before membrane translocation, in contrast to other lantibiotics for which the cleavage occur after translocation. This is suggested by the probable cytoplasmic localization of the serine protease ElxP that cleaves the leader peptide. The N-terminal D-lactate is probably produced by dehydration of Ser-25 by ElxB, followed by proteolytic removal of the leader peptide by the serine protease ElxP and hydrolysis of the resulting new N-terminal dehydroalanine. This hydrolysis may occur spontaneously. The pyruvate group thus formed is reduced to D-lactate by the NADPH-dependent oxidoreductase ElxO. This N-terminal D-lactate protects the lantibiotic against degradation against aminopeptidase. In terms of processing, it is not established whether the 2,3-didehydrobutyrines are the E- or Z-isomers.

Functionally, lanthionine-containing peptide antibiotic (lantibiotic) active on Gram-positive bacteria such as staphylococci, enterococci and streptococci. The bactericidal activity of lantibiotics is based on depolarization of energized bacterial cytoplasmic membranes, initiated by the formation of aqueous transmembrane pores. This is Lantibiotic epilancin 15X from Staphylococcus epidermidis.